The chain runs to 228 residues: Small ribosomal subunit protein uS3 (228 aa).

The region spanning 39–107 is the KH type-2 domain; the sequence is VREYLQDKLK…PVHINIEEIR (69 aa).

It belongs to the universal ribosomal protein uS3 family. In terms of assembly, part of the 30S ribosomal subunit. Forms a tight complex with proteins S10 and S14.

Functionally, binds the lower part of the 30S subunit head. Binds mRNA in the 70S ribosome, positioning it for translation. In Stutzerimonas stutzeri (strain A1501) (Pseudomonas stutzeri), this protein is Small ribosomal subunit protein uS3.